We begin with the raw amino-acid sequence, 432 residues long: Gamma-glutamyl phosphate reductase (432 aa).

Belongs to the gamma-glutamyl phosphate reductase family.

Its subcellular location is the cytoplasm. It catalyses the reaction L-glutamate 5-semialdehyde + phosphate + NADP(+) = L-glutamyl 5-phosphate + NADPH + H(+). Its pathway is amino-acid biosynthesis; L-proline biosynthesis; L-glutamate 5-semialdehyde from L-glutamate: step 2/2. Its function is as follows. Catalyzes the NADPH-dependent reduction of L-glutamate 5-phosphate into L-glutamate 5-semialdehyde and phosphate. The product spontaneously undergoes cyclization to form 1-pyrroline-5-carboxylate. The chain is Gamma-glutamyl phosphate reductase from Corynebacterium melassecola.